A 445-amino-acid chain; its full sequence is Tubulin beta-2 chain (445 aa).

Residues glutamine 11, glutamate 69, serine 138, glycine 142, threonine 143, glycine 144, asparagine 204, and asparagine 226 each coordinate GTP. Glutamate 69 serves as a coordination point for Mg(2+). The tract at residues 424–445 (QYQDATAEDEGEFDEDEEVEEA) is disordered. The segment covering 429 to 445 (TAEDEGEFDEDEEVEEA) has biased composition (acidic residues).

It belongs to the tubulin family. In terms of assembly, dimer of alpha and beta chains. A typical microtubule is a hollow water-filled tube with an outer diameter of 25 nm and an inner diameter of 15 nM. Alpha-beta heterodimers associate head-to-tail to form protofilaments running lengthwise along the microtubule wall with the beta-tubulin subunit facing the microtubule plus end conferring a structural polarity. Microtubules usually have 13 protofilaments but different protofilament numbers can be found in some organisms and specialized cells. It depends on Mg(2+) as a cofactor.

Its subcellular location is the cytoplasm. It localises to the cytoskeleton. Tubulin is the major constituent of microtubules, a cylinder consisting of laterally associated linear protofilaments composed of alpha- and beta-tubulin heterodimers. Microtubules grow by the addition of GTP-tubulin dimers to the microtubule end, where a stabilizing cap forms. Below the cap, tubulin dimers are in GDP-bound state, owing to GTPase activity of alpha-tubulin. This chain is Tubulin beta-2 chain (TUB-2), found in Echinococcus multilocularis (Fox tapeworm).